A 792-amino-acid polypeptide reads, in one-letter code: Lon protease (792 aa).

Positions 16 to 208 constitute a Lon N-terminal domain; the sequence is LPILPLRETV…KVTYYLTREL (193 aa). An ATP-binding site is contributed by 360–367; sequence GPPGVGKT. Positions 597 to 778 constitute a Lon proteolytic domain; it reads KDEVGVATGL…DEVLNLALLE (182 aa). Catalysis depends on residues Ser-684 and Lys-727.

Belongs to the peptidase S16 family. Homohexamer. Organized in a ring with a central cavity.

The protein resides in the cytoplasm. The catalysed reaction is Hydrolysis of proteins in presence of ATP.. ATP-dependent serine protease that mediates the selective degradation of mutant and abnormal proteins as well as certain short-lived regulatory proteins. Required for cellular homeostasis and for survival from DNA damage and developmental changes induced by stress. Degrades polypeptides processively to yield small peptide fragments that are 5 to 10 amino acids long. Binds to DNA in a double-stranded, site-specific manner. The polypeptide is Lon protease (Dictyoglomus thermophilum (strain ATCC 35947 / DSM 3960 / H-6-12)).